The following is a 269-amino-acid chain: tRNA uridine(34) hydroxylase (269 aa).

Positions 122 to 216 constitute a Rhodanese domain; sequence QDPEVVLIDV…YLEAIAPEEN (95 aa). Cysteine 176 acts as the Cysteine persulfide intermediate in catalysis.

The protein belongs to the TrhO family.

The enzyme catalyses uridine(34) in tRNA + AH2 + O2 = 5-hydroxyuridine(34) in tRNA + A + H2O. Functionally, catalyzes oxygen-dependent 5-hydroxyuridine (ho5U) modification at position 34 in tRNAs. In Synechococcus elongatus (strain ATCC 33912 / PCC 7942 / FACHB-805) (Anacystis nidulans R2), this protein is tRNA uridine(34) hydroxylase.